The primary structure comprises 114 residues: Putative cysteine proteinase inhibitor 9 (114 aa).

An N-terminal signal peptide occupies residues 1–23 (MRTSSLVLFAAVAVFGAACTAAA).

It belongs to the cystatin family. Phytocystatin subfamily.

Its subcellular location is the secreted. Functionally, specific inhibitor of cysteine proteinases. Probably involved in the regulation of endogenous processes and in defense against pests and pathogens. The chain is Putative cysteine proteinase inhibitor 9 from Oryza sativa subsp. japonica (Rice).